The sequence spans 405 residues: Aspartokinase (405 aa).

An ATP-binding site is contributed by 7–10 (KYGG). Residue 25–30 (RIAHYR) coordinates substrate. S41 is a binding site for ATP. Residues 47-49 (TDE), E74, 125-126 (LE), 150-153 (RGGS), and S153 each bind substrate. ATP is bound by residues 173-174 (TD), 179-184 (YTTDPH), and R209. ACT domains lie at 263-342 (IGLI…IAKV) and 344-405 (IVGV…LDKA). Substrate contacts are provided by residues D270, 288-290 (AVD), Q294, 355-356 (VP), 369-370 (NI), and 376-377 (SE).

It belongs to the aspartokinase family. In terms of assembly, tetramer consisting of 2 isoforms Alpha (catalytic and regulation) and of a homodimer of 2 isoforms Beta (regulation).

It carries out the reaction L-aspartate + ATP = 4-phospho-L-aspartate + ADP. It participates in amino-acid biosynthesis; L-lysine biosynthesis via DAP pathway; (S)-tetrahydrodipicolinate from L-aspartate: step 1/4. The protein operates within amino-acid biosynthesis; L-methionine biosynthesis via de novo pathway; L-homoserine from L-aspartate: step 1/3. It functions in the pathway amino-acid biosynthesis; L-threonine biosynthesis; L-threonine from L-aspartate: step 1/5. Catalyzes the phosphorylation of the beta-carboxyl group of aspartic acid with ATP to yield 4-phospho-L-aspartate, which is involved in the branched biosynthetic pathway leading to the biosynthesis of amino acids lysine, threonine, isoleucine and methionine. The sequence is that of Aspartokinase (ask) from Thermus thermophilus (strain ATCC BAA-163 / DSM 7039 / HB27).